The sequence spans 100 residues: Aspartyl/glutamyl-tRNA(Asn/Gln) amidotransferase subunit C (100 aa).

This sequence belongs to the GatC family. Heterotrimer of A, B and C subunits.

It carries out the reaction L-glutamyl-tRNA(Gln) + L-glutamine + ATP + H2O = L-glutaminyl-tRNA(Gln) + L-glutamate + ADP + phosphate + H(+). The catalysed reaction is L-aspartyl-tRNA(Asn) + L-glutamine + ATP + H2O = L-asparaginyl-tRNA(Asn) + L-glutamate + ADP + phosphate + 2 H(+). In terms of biological role, allows the formation of correctly charged Asn-tRNA(Asn) or Gln-tRNA(Gln) through the transamidation of misacylated Asp-tRNA(Asn) or Glu-tRNA(Gln) in organisms which lack either or both of asparaginyl-tRNA or glutaminyl-tRNA synthetases. The reaction takes place in the presence of glutamine and ATP through an activated phospho-Asp-tRNA(Asn) or phospho-Glu-tRNA(Gln). The protein is Aspartyl/glutamyl-tRNA(Asn/Gln) amidotransferase subunit C of Dictyoglomus turgidum (strain DSM 6724 / Z-1310).